A 352-amino-acid polypeptide reads, in one-letter code: Putative hetero-Diels-Alderase (352 aa).

The N-terminal stretch at 1–20 is a signal peptide; that stretch reads MRYHLSALVLVFTAFRETLT. N-linked (GlcNAc...) asparagine glycans are attached at residues Asn-26, Asn-41, Asn-47, Asn-135, Asn-211, and Asn-310.

The protein belongs to the eupF Diels-Alderase family.

Its pathway is secondary metabolite biosynthesis; terpenoid biosynthesis. Putative hetero-Diels-Alderase; part of the gene cluster that mediates the biosynthesis of eupenifeldin, a bistropolone meroterpenoid that acts as an antitumor agent. The first step of eupenifeldin biosynthesis is the biosynthesis of 3-methylorcinaldehyde performed by the non-reducing polyketide synthase eupA. Oxidative dearomatization of 3-methylorcinaldehyde likely catalyzed by the FAD-dependent monooxygenase eupB is followed by oxidative ring expansion by the 2-oxoglutarate-dependent dioxygenase eupC to provide the first tropolone metabolite, tropolone stipitaldehyde. In parallel, generation of sesquiterpene alpha-humulene from farnesylpyrophosphate (FPP) is catalyzed by the terpene cyclase eupE. The cytochrome P450 monooxygenase eupD then hydroxylates humulene to humulenol. The putative Diels-Alderase eupF probably catalyzes the formation of the tropolone-humulene skeleton by linking humulenol and the polyketide moiety. The short-chain dehydrogenase/reductase eupG and the flavin-dependent monooxygenase eupH are also essential for eupenifeldin biosynthesis and are likely the additional decorating enzymes of the tropolone-humulene skeleton to produce final eupenifeldin or derivatives. The protein is Putative hetero-Diels-Alderase of Phoma sp.